Consider the following 660-residue polypeptide: ATP-dependent RNA helicase DDX18 (660 aa).

The interval R16–V153 is disordered. Over residues L25–N40 the composition is skewed to polar residues. Positions P124 to E133 are enriched in basic and acidic residues. A compositionally biased stretch (acidic residues) spans S134–D143. Residues F169–H197 carry the Q motif motif. Positions I200–Y375 constitute a Helicase ATP-binding domain. An ATP-binding site is contributed by A213 to T220. The DEAD box motif lies at D323 to D326. A Helicase C-terminal domain is found at G389 to I559.

It belongs to the DEAD box helicase family. DDX18/HAS1 subfamily. In terms of assembly, interacts with NOL8; the interaction is RNA-dependent. Interacts with PRC2 complex components EZH2, SUZ2 and JARID2; these interactions prevent deposition of the repressive H3K27me3 mark onto rDNA in pluripotent cells.

Its subcellular location is the nucleus. The protein localises to the nucleolus. The protein resides in the chromosome. It catalyses the reaction ATP + H2O = ADP + phosphate + H(+). In terms of biological role, ATP-dependent RNA helicase that plays a role in the regulation of R-loop homeostasis in both endogenous R-loop-prone regions and at sites of DNA damage. At endogenous loci such as actively transcribed genes, may act as a helicase to resolve the formation of R-loop during transcription and prevent the interference of R-loop with DNA-replication machinery. Also participates in the removal of DNA-lesion-associated R-loop. Plays an essential role for establishing pluripotency during embryogenesis and for pluripotency maintenance in embryonic stem cells. Mechanistically, prevents the polycomb repressive complex 2 (PRC2) from accessing rDNA loci and protects the active chromatin status in nucleolus. The polypeptide is ATP-dependent RNA helicase DDX18 (Ddx18) (Mus musculus (Mouse)).